A 189-amino-acid chain; its full sequence is MARLCAFLMVLAVLSYWPTCSLGCDLPQTHNLRNKRALTLLVQMRRLSPLSCLKDRKDFGFPQEKVDAQQIKKAQAIPVLSELTQQILNIFTSKDSSAAWNTTLLDSFCNDLHQQLNDLQGCLMQQVGVQEFPLTQEDALLAVRKYFHRITVYLREKKHSPCAWEVVRAEVWRALSSSANVLGRLREEK.

Residues 1-23 (MARLCAFLMVLAVLSYWPTCSLG) form the signal peptide. Cystine bridges form between Cys24–Cys122 and Cys52–Cys162. N-linked (GlcNAc...) asparagine glycosylation is present at Asn101.

It belongs to the alpha/beta interferon family. In terms of assembly, interacts with CR2. In terms of processing, glycosylated.

It is found in the secreted. In terms of biological role, produced by macrophages, IFN-alpha have antiviral activities. Interferon stimulates the production of two enzymes: a protein kinase and an oligoadenylate synthetase. The sequence is that of Interferon alpha-1 (Ifna1) from Mus musculus (Mouse).